A 492-amino-acid polypeptide reads, in one-letter code: MGSCLSAESRSPRPGSPCSPAFSVRKRKNSKKRPGSRNSSFDYRREEPLNQVPGRMFLNGSTEVACIYTQQGKKGPNQDAMVVWENFGSRTDTIFCGVFDGHGPYGHMVAKRVRDNLPLKLSAYWEAKVPVEGVLKAITTDTVNNVTNINNPEDAAAAAAFVTAEEEPRTSADMEEENTETQPELFQTLKESFLKAFKVMDRELKFHGSVDCFCSGTTAVTLIKQGQYLVVGNVGDSRAVMGTRDSENTLVAVQLTVDLKPNLPAEAERIRKCRGRVFALRDEPEVCRVWLPNCDSPGLAMARAFGDFCLKDFGLISVPDVSFRQLTEKDEFIVLATDGIWDVLSNEDVVAIVASAPSRSSAARALVESAVRAWRYKYPTSKVDDCAAVCLYLDSSNTNAISTASSISKLEDGEEEELKATTEDDDASGPSGLGRSSTVRSGKEIALDESETEKLIKEADNLDSEPGTEYSALEGVARVNTLLNLPRFVPGK.

The disordered stretch occupies residues 1–46; that stretch reads MGSCLSAESRSPRPGSPCSPAFSVRKRKNSKKRPGSRNSSFDYRRE. Residues 24 to 35 show a composition bias toward basic residues; the sequence is VRKRKNSKKRPG. Residues 64–393 form the PPM-type phosphatase domain; sequence VACIYTQQGK…DDCAAVCLYL (330 aa). Mn(2+)-binding residues include aspartate 100, glycine 101, aspartate 338, and aspartate 384. Residues 406-468 are disordered; sequence SISKLEDGEE…ADNLDSEPGT (63 aa). Acidic residues predominate over residues 412–427; it reads DGEEEELKATTEDDDA. Residues 441-460 show a composition bias toward basic and acidic residues; it reads SGKEIALDESETEKLIKEAD.

The protein belongs to the PP2C family. Requires Mg(2+) as cofactor. The cofactor is Mn(2+).

The enzyme catalyses O-phospho-L-seryl-[protein] + H2O = L-seryl-[protein] + phosphate. It catalyses the reaction O-phospho-L-threonyl-[protein] + H2O = L-threonyl-[protein] + phosphate. This Arabidopsis thaliana (Mouse-ear cress) protein is Probable protein phosphatase 2C 33 (PPC6-1).